The chain runs to 88 residues: Small ribosomal subunit protein bS20 (88 aa).

Belongs to the bacterial ribosomal protein bS20 family.

Its function is as follows. Binds directly to 16S ribosomal RNA. This chain is Small ribosomal subunit protein bS20, found in Clostridium novyi (strain NT).